The sequence spans 47 residues: Ribosome-inactivating protein luffin P1 (47 aa).

Intrachain disulfides connect Cys12/Cys33 and Cys16/Cys29.

As to quaternary structure, homotetramer.

It carries out the reaction Endohydrolysis of the N-glycosidic bond at one specific adenosine on the 28S rRNA.. Functionally, inhibits protein synthesis in animal cells. The polypeptide is Ribosome-inactivating protein luffin P1 (Luffa aegyptiaca (Sponge gourd)).